We begin with the raw amino-acid sequence, 580 residues long: Peptidyl-prolyl cis-trans isomerase-like 2 (580 aa).

Residues 42–115 enclose the U-box domain; that stretch reads KRLPFRFCSL…GEYIDPVTYK (74 aa). Disordered stretches follow at residues 182–201, 227–259, 439–459, 479–530, and 553–580; these read IKEGESGLSDEQLREREDPS, QERAQKAGNAASTPVAKTDAPVKSAQKTASYQS, SPTLNKLETHPVNPTTNRPTP, QKKQ…SSTT, and FVDEEPTSEPAKKKFKGIGGFGDFSSWD. Residues 309–468 form the PPIase cyclophilin-type domain; the sequence is QKGYARISTT…PDIRIVDVTI (160 aa). A compositionally biased stretch (polar residues) spans 439 to 457; it reads SPTLNKLETHPVNPTTNRP. A compositionally biased stretch (basic and acidic residues) spans 490–507; the sequence is EANRTAENDEEGSRRAED.

This sequence belongs to the cyclophilin-type PPIase family. PPIL2 subfamily.

It is found in the nucleus. It carries out the reaction [protein]-peptidylproline (omega=180) = [protein]-peptidylproline (omega=0). It catalyses the reaction S-ubiquitinyl-[E2 ubiquitin-conjugating enzyme]-L-cysteine + [acceptor protein]-L-lysine = [E2 ubiquitin-conjugating enzyme]-L-cysteine + N(6)-ubiquitinyl-[acceptor protein]-L-lysine.. The protein operates within protein modification; protein ubiquitination. Functionally, may catalyze the cis-trans isomerization of proline imidic peptide bonds in oligopeptides thereby assisting the folding of proteins. May also function as a chaperone, playing a role in intracellular transport of proteins. May also have a protein ubiquitin ligase activity acting as an E3 ubiquitin protein ligase or as a ubiquitin-ubiquitin ligase promoting elongation of ubiquitin chains on proteins. The sequence is that of Peptidyl-prolyl cis-trans isomerase-like 2 (cyp8) from Emericella nidulans (strain FGSC A4 / ATCC 38163 / CBS 112.46 / NRRL 194 / M139) (Aspergillus nidulans).